The sequence spans 556 residues: Calcium-dependent protein kinase 5 (556 aa).

Residues 1-40 (MGNSCRGSFKDKLDEGDNNKPEDYSKTSTTNLSSNSDHSP) are disordered. G2 carries the N-myristoyl glycine lipid modification. Residues 8-25 (SFKDKLDEGDNNKPEDYS) are compositionally biased toward basic and acidic residues. Residues 26-39 (KTSTTNLSSNSDHS) are compositionally biased toward low complexity. Residues 97–355 (YTLSRKLGQG…AHEVLRHPWI (259 aa)) enclose the Protein kinase domain. Residues 103-111 (LGQGQFGTT) and K126 contribute to the ATP site. D221 functions as the Proton acceptor in the catalytic mechanism. S261 is subject to Phosphoserine. Residues 361-391 (APDRALDPAVLSRLKQFSAMNKLKKMALKVI) form an autoinhibitory domain region. EF-hand domains lie at 398–433 (EEIA…YGST), 434–469 (LKDT…LNKL), 470–505 (EREE…HGMA), and 509–539 (LEDI…GNAG). Ca(2+) contacts are provided by D411, D413, S415, E422, D447, D449, S451, T453, E458, D483, D485, S487, E494, D517, N519, D521, K523, and E528.

Belongs to the protein kinase superfamily. Ser/Thr protein kinase family. CDPK subfamily.

The protein localises to the membrane. The catalysed reaction is L-seryl-[protein] + ATP = O-phospho-L-seryl-[protein] + ADP + H(+). It catalyses the reaction L-threonyl-[protein] + ATP = O-phospho-L-threonyl-[protein] + ADP + H(+). Activated by calcium. Autophosphorylation may play an important role in the regulation of the kinase activity. Its function is as follows. May play a role in signal transduction pathways that involve calcium as a second messenger. This Arabidopsis thaliana (Mouse-ear cress) protein is Calcium-dependent protein kinase 5 (CPK5).